The primary structure comprises 146 residues: Ribonuclease H (146 aa).

One can recognise an RNase H type-1 domain in the interval 4 to 145 (ELNKVVIYTD…ADMLARSQIV (142 aa)). Positions 13, 51, 73, and 137 each coordinate Mg(2+).

This sequence belongs to the RNase H family. As to quaternary structure, monomer. The cofactor is Mg(2+).

It localises to the cytoplasm. The catalysed reaction is Endonucleolytic cleavage to 5'-phosphomonoester.. Functionally, endonuclease that specifically degrades the RNA of RNA-DNA hybrids. The polypeptide is Ribonuclease H (Ehrlichia chaffeensis (strain ATCC CRL-10679 / Arkansas)).